The sequence spans 92 residues: Small ribosomal subunit protein uS19 (92 aa).

Belongs to the universal ribosomal protein uS19 family.

In terms of biological role, protein S19 forms a complex with S13 that binds strongly to the 16S ribosomal RNA. In Bradyrhizobium diazoefficiens (strain JCM 10833 / BCRC 13528 / IAM 13628 / NBRC 14792 / USDA 110), this protein is Small ribosomal subunit protein uS19.